Reading from the N-terminus, the 346-residue chain is Small glutamine-rich tetratricopeptide repeat-containing protein 2 (346 aa).

TPR repeat units lie at residues 102-135 (AEDLKMQGNKAMANKDYELAINKYTEAIKVLPTN), 136-169 (AIYYANRAAAHSSLKEYDQAVKDAESAISIDPSY), 170-203 (FRGYSRLGFAKYAQGKPEEALEAYKKVLDIEGDN), and 205-229 (TEAMKRDYESAKKKVEQSLNLEKTV). Residues 219–249 (VEQSLNLEKTVPEQSRDADVDASQGASAGGL) form a disordered region. Over residues 228 to 237 (TVPEQSRDAD) the composition is skewed to basic and acidic residues. The residue at position 308 (threonine 308) is a Phosphothreonine. The tract at residues 325–346 (GNLFGGAGAQSTDETPDNENKQ) is disordered.

Belongs to the SGT family. In terms of assembly, interacts with HSC82, HSP104, MDY2, SSA1 and SSA2.

It is found in the cytoplasm. In terms of biological role, co-chaperone that binds to the molecular chaperone Hsp70 (SSA1 and SSA2). Regulates Hsp70 ATPase activity. Required for recovery from heat shock. The sequence is that of Small glutamine-rich tetratricopeptide repeat-containing protein 2 (SGT2) from Saccharomyces cerevisiae (strain ATCC 204508 / S288c) (Baker's yeast).